Reading from the N-terminus, the 360-residue chain is Peptide chain release factor 1 (360 aa).

At Gln235 the chain carries N5-methylglutamine. The disordered stretch occupies residues 284–313 (AKRQQAEASTRRNLLGSGDRSDRNRTYNFP).

It belongs to the prokaryotic/mitochondrial release factor family. In terms of processing, methylated by PrmC. Methylation increases the termination efficiency of RF1.

It localises to the cytoplasm. Its function is as follows. Peptide chain release factor 1 directs the termination of translation in response to the peptide chain termination codons UAG and UAA. This chain is Peptide chain release factor 1, found in Citrobacter koseri (strain ATCC BAA-895 / CDC 4225-83 / SGSC4696).